We begin with the raw amino-acid sequence, 218 residues long: Riboflavin synthase (218 aa).

2 Lumazine-binding repeats span residues Met-1–His-97 and Ile-98–Leu-194. 2,4-dihydroxypteridine is bound by residues Gly-4 to Ile-6, Cys-48 to Thr-50, Asp-62 to Thr-67, Gly-101 to Val-103, Lys-136, Ser-145 to Thr-147, and Thr-159 to Thr-164.

In terms of assembly, homotrimer.

The enzyme catalyses 2 6,7-dimethyl-8-(1-D-ribityl)lumazine + H(+) = 5-amino-6-(D-ribitylamino)uracil + riboflavin. The protein operates within cofactor biosynthesis; riboflavin biosynthesis; riboflavin from 2-hydroxy-3-oxobutyl phosphate and 5-amino-6-(D-ribitylamino)uracil: step 2/2. In terms of biological role, catalyzes the dismutation of two molecules of 6,7-dimethyl-8-ribityllumazine, resulting in the formation of riboflavin and 5-amino-6-(D-ribitylamino)uracil. The chain is Riboflavin synthase from Photobacterium phosphoreum.